We begin with the raw amino-acid sequence, 290 residues long: Putative transport permease ycf38 (290 aa).

The next 7 membrane-spanning stretches (helical) occupy residues 21-41, 46-66, 86-106, 133-153, 167-187, 194-213, and 261-281; these read VTSF…FIQL, ITLI…GALF, PGIL…PLIF, FFIS…GVFL, FFFL…LALL, LIAV…TALA, and INIG…FLLF. The 239-residue stretch at 46–284 folds into the ABC transmembrane type-2 domain; the sequence is ITLISGILQP…LVGFLLFKKI (239 aa).

The protein belongs to the ABC-2 integral membrane protein family.

Its subcellular location is the plastid. The protein localises to the cyanelle membrane. This is Putative transport permease ycf38 (ycf38) from Cyanophora paradoxa.